The sequence spans 81 residues: Large ribosomal subunit protein bL31B (81 aa).

This sequence belongs to the bacterial ribosomal protein bL31 family. Type B subfamily. Part of the 50S ribosomal subunit.

In Bacillus licheniformis (strain ATCC 14580 / DSM 13 / JCM 2505 / CCUG 7422 / NBRC 12200 / NCIMB 9375 / NCTC 10341 / NRRL NRS-1264 / Gibson 46), this protein is Large ribosomal subunit protein bL31B.